A 453-amino-acid chain; its full sequence is Probable phenylalanine--tRNA ligase, mitochondrial (453 aa).

The transit peptide at 1-27 (MLLTLRVQGARHWLKSTRCLASSAAPA) directs the protein to the mitochondrion. Residues 142 to 145 (TAHQ), arginine 164, 171 to 173 (THY), 178 to 180 (QAD), glutamate 285, and phenylalanine 310 each bind substrate. Residues 356–453 (SHYPQCTNDL…SVDSFNVQIR (98 aa)) form the FDX-ACB domain.

Belongs to the class-II aminoacyl-tRNA synthetase family.

It is found in the mitochondrion matrix. The catalysed reaction is tRNA(Phe) + L-phenylalanine + ATP = L-phenylalanyl-tRNA(Phe) + AMP + diphosphate + H(+). Is responsible for the charging of tRNA(Phe) with phenylalanine in mitochondrial translation. This chain is Probable phenylalanine--tRNA ligase, mitochondrial, found in Drosophila melanogaster (Fruit fly).